A 423-amino-acid chain; its full sequence is 3-phosphoshikimate 1-carboxyvinyltransferase (423 aa).

3-phosphoshikimate is bound by residues K21, S22, and R26. Position 21 (K21) interacts with phosphoenolpyruvate. Phosphoenolpyruvate is bound by residues G93 and R123. 3-phosphoshikimate is bound by residues S168, S169, Q170, S196, D311, and K338. Q170 is a phosphoenolpyruvate binding site. D311 functions as the Proton acceptor in the catalytic mechanism. Phosphoenolpyruvate is bound by residues R342, R383, and K408.

Belongs to the EPSP synthase family. As to quaternary structure, monomer.

Its subcellular location is the cytoplasm. The enzyme catalyses 3-phosphoshikimate + phosphoenolpyruvate = 5-O-(1-carboxyvinyl)-3-phosphoshikimate + phosphate. It functions in the pathway metabolic intermediate biosynthesis; chorismate biosynthesis. Catalyzes the transfer of the enolpyruvyl moiety of phosphoenolpyruvate (PEP) to the 5-hydroxyl of shikimate-3-phosphate (S3P) to produce enolpyruvyl shikimate-3-phosphate and inorganic phosphate. This is 3-phosphoshikimate 1-carboxyvinyltransferase from Methanosphaerula palustris (strain ATCC BAA-1556 / DSM 19958 / E1-9c).